Consider the following 309-residue polypeptide: Elongation factor Ts, mitochondrial (309 aa).

This sequence belongs to the EF-Ts family.

Its subcellular location is the mitochondrion. In terms of biological role, associates with the EF-Tu.GDP complex and induces the exchange of GDP to GTP. It remains bound to the aminoacyl-tRNA.EF-Tu.GTP complex up to the GTP hydrolysis stage on the ribosome. The chain is Elongation factor Ts, mitochondrial (tsfm) from Salmo salar (Atlantic salmon).